The primary structure comprises 443 residues: Threonine/serine transporter TdcC (443 aa).

A run of 11 helical transmembrane segments spans residues 22 to 42 (TTWT…FFPI), 44 to 64 (AGFG…PIAF), 97 to 117 (GVVI…IYGV), 140 to 160 (FVAL…KDLM), 163 to 183 (VMSY…LSLI), 207 to 227 (ILVT…FSPI), 259 to 279 (ASML…FTLS), 319 to 339 (ASII…LGTL), 366 to 386 (ISMI…PNIL), 389 to 409 (IEAM…MYAI), and 423 to 443 (DNVF…YKLF).

Belongs to the amino acid/polyamine transporter 2 family. SdaC/TdcC subfamily.

Its subcellular location is the cell inner membrane. It carries out the reaction L-threonine(in) + H(+)(in) = L-threonine(out) + H(+)(out). The catalysed reaction is L-serine(in) + H(+)(in) = L-serine(out) + H(+)(out). Functionally, involved in the import of threonine and serine into the cell, with the concomitant import of a proton (symport system). This is Threonine/serine transporter TdcC from Salmonella paratyphi A (strain ATCC 9150 / SARB42).